The sequence spans 261 residues: Triosephosphate isomerase (261 aa).

10-12 provides a ligand contact to substrate; that stretch reads NWK. His100 acts as the Electrophile in catalysis. Glu172 acts as the Proton acceptor in catalysis. Substrate is bound by residues Gly178, Ser218, and 239–240; that span reads GG.

The protein belongs to the triosephosphate isomerase family. As to quaternary structure, homodimer.

It localises to the cytoplasm. It catalyses the reaction D-glyceraldehyde 3-phosphate = dihydroxyacetone phosphate. Its pathway is carbohydrate biosynthesis; gluconeogenesis. The protein operates within carbohydrate degradation; glycolysis; D-glyceraldehyde 3-phosphate from glycerone phosphate: step 1/1. In terms of biological role, involved in the gluconeogenesis. Catalyzes stereospecifically the conversion of dihydroxyacetone phosphate (DHAP) to D-glyceraldehyde-3-phosphate (G3P). The polypeptide is Triosephosphate isomerase (Mycobacterium avium (strain 104)).